A 379-amino-acid polypeptide reads, in one-letter code: Beta sliding clamp (379 aa).

The protein belongs to the beta sliding clamp family. As to quaternary structure, forms a ring-shaped head-to-tail homodimer around DNA which binds and tethers DNA polymerases and other proteins to the DNA. The DNA replisome complex has a single clamp-loading complex (3 tau and 1 each of delta, delta', psi and chi subunits) which binds 3 Pol III cores (1 core on the leading strand and 2 on the lagging strand) each with a beta sliding clamp dimer. Additional proteins in the replisome are other copies of gamma, psi and chi, Ssb, DNA helicase and RNA primase.

The protein resides in the cytoplasm. In terms of biological role, confers DNA tethering and processivity to DNA polymerases and other proteins. Acts as a clamp, forming a ring around DNA (a reaction catalyzed by the clamp-loading complex) which diffuses in an ATP-independent manner freely and bidirectionally along dsDNA. Initially characterized for its ability to contact the catalytic subunit of DNA polymerase III (Pol III), a complex, multichain enzyme responsible for most of the replicative synthesis in bacteria; Pol III exhibits 3'-5' exonuclease proofreading activity. The beta chain is required for initiation of replication as well as for processivity of DNA replication. This chain is Beta sliding clamp (dnaN), found in Rickettsia bellii (strain RML369-C).